Reading from the N-terminus, the 58-residue chain is UPF0391 membrane protein COXBURSA331_A2131 (58 aa).

Transmembrane regions (helical) follow at residues 3-23 and 30-50; these read FWVL…FTGI and IAKI…IAML.

The protein belongs to the UPF0391 family.

The protein localises to the cell membrane. The chain is UPF0391 membrane protein COXBURSA331_A2131 from Coxiella burnetii (strain RSA 331 / Henzerling II).